Consider the following 136-residue polypeptide: Small ribosomal subunit protein bS16 (136 aa).

A compositionally biased stretch (basic residues) spans 113 to 122 (LALKSHRRSA). Positions 113-136 (LALKSHRRSAKKEAEAKAATGGEA) are disordered.

This sequence belongs to the bacterial ribosomal protein bS16 family.

This chain is Small ribosomal subunit protein bS16, found in Pelodictyon phaeoclathratiforme (strain DSM 5477 / BU-1).